A 413-amino-acid polypeptide reads, in one-letter code: Multifunctional CCA protein (413 aa).

ATP-binding residues include Gly8 and Arg11. 2 residues coordinate CTP: Gly8 and Arg11. Mg(2+)-binding residues include Asp21 and Asp23. 3 residues coordinate ATP: Arg91, Arg143, and Arg146. The CTP site is built by Arg91, Arg143, and Arg146. In terms of domain architecture, HD spans 232-333 (TGVHVMMVVD…VRLFERSDAL (102 aa)).

The protein belongs to the tRNA nucleotidyltransferase/poly(A) polymerase family. Bacterial CCA-adding enzyme type 1 subfamily. In terms of assembly, monomer. Can also form homodimers and oligomers. Mg(2+) is required as a cofactor. The cofactor is Ni(2+).

It carries out the reaction a tRNA precursor + 2 CTP + ATP = a tRNA with a 3' CCA end + 3 diphosphate. The catalysed reaction is a tRNA with a 3' CCA end + 2 CTP + ATP = a tRNA with a 3' CCACCA end + 3 diphosphate. In terms of biological role, catalyzes the addition and repair of the essential 3'-terminal CCA sequence in tRNAs without using a nucleic acid template. Adds these three nucleotides in the order of C, C, and A to the tRNA nucleotide-73, using CTP and ATP as substrates and producing inorganic pyrophosphate. tRNA 3'-terminal CCA addition is required both for tRNA processing and repair. Also involved in tRNA surveillance by mediating tandem CCA addition to generate a CCACCA at the 3' terminus of unstable tRNAs. While stable tRNAs receive only 3'-terminal CCA, unstable tRNAs are marked with CCACCA and rapidly degraded. The chain is Multifunctional CCA protein from Burkholderia lata (strain ATCC 17760 / DSM 23089 / LMG 22485 / NCIMB 9086 / R18194 / 383).